A 259-amino-acid chain; its full sequence is Haloacid dehalogenase-like hydrolase domain-containing protein 2 (259 aa).

Positions 13 and 15 each coordinate Mg(2+). Substrate is bound by residues 13–15 and 46–47; these read DLS and TN. Residues 47-71 are a coiled coil; that stretch reads NTTKESKQDLLERLRKLEFDISEDE. An N6-succinyllysine modification is found at lysine 50. Lysine 179 contacts substrate. Residue aspartate 204 coordinates Mg(2+).

This sequence belongs to the HAD-like hydrolase superfamily. Mg(2+) is required as a cofactor.

The chain is Haloacid dehalogenase-like hydrolase domain-containing protein 2 (HDHD2) from Pongo abelii (Sumatran orangutan).